The primary structure comprises 418 residues: 26S proteasome regulatory subunit 6B (418 aa).

N-acetylmethionine is present on M1. S21 carries the phosphoserine modification. Phosphothreonine is present on T25. A Phosphoserine modification is found at S28. 206-213 contributes to the ATP binding site; the sequence is GPPGCGKT. N6-acetyllysine is present on residues K397 and K401.

It belongs to the AAA ATPase family. In terms of assembly, component of the 19S proteasome regulatory particle complex. The 26S proteasome consists of a 20S core particle (CP) and two 19S regulatory subunits (RP). The regulatory particle is made of a lid composed of 9 subunits, a base containing 6 ATPases including PSMC4 and few additional components. Interacts with NR1I3. Interacts with PAAF1. Interacts with TRIM5. Interacts with ZFAND1.

Its subcellular location is the cytoplasm. The protein resides in the nucleus. Component of the 26S proteasome, a multiprotein complex involved in the ATP-dependent degradation of ubiquitinated proteins. This complex plays a key role in the maintenance of protein homeostasis by removing misfolded or damaged proteins, which could impair cellular functions, and by removing proteins whose functions are no longer required. Therefore, the proteasome participates in numerous cellular processes, including cell cycle progression, apoptosis, or DNA damage repair. PSMC4 belongs to the heterohexameric ring of AAA (ATPases associated with diverse cellular activities) proteins that unfolds ubiquitinated target proteins that are concurrently translocated into a proteolytic chamber and degraded into peptides. In Bos taurus (Bovine), this protein is 26S proteasome regulatory subunit 6B (PSMC4).